The primary structure comprises 118 residues: NADPH-dependent 7-cyano-7-deazaguanine reductase (118 aa).

Residue Cys31 is the Thioimide intermediate of the active site. The Proton donor role is filled by Asp38. Substrate contacts are provided by residues 53 to 55 (VEL) and 72 to 73 (YE).

Belongs to the GTP cyclohydrolase I family. QueF type 1 subfamily.

Its subcellular location is the cytoplasm. The enzyme catalyses 7-aminomethyl-7-carbaguanine + 2 NADP(+) = 7-cyano-7-deazaguanine + 2 NADPH + 3 H(+). Its pathway is tRNA modification; tRNA-queuosine biosynthesis. In terms of biological role, catalyzes the NADPH-dependent reduction of 7-cyano-7-deazaguanine (preQ0) to 7-aminomethyl-7-deazaguanine (preQ1). In Chlorobium phaeobacteroides (strain BS1), this protein is NADPH-dependent 7-cyano-7-deazaguanine reductase.